The sequence spans 141 residues: Single-stranded DNA-binding protein 2 (141 aa).

Residues 1-104 (MLNRTVLVGR…VVADSVQFLE (104 aa)) enclose the SSB domain. Residues 104 to 141 (EPKNNNQQQNNNYQQQRQTQTGNNPFDNNADSIEDLPF) are disordered. Residues 107–127 (NNNQQQNNNYQQQRQTQTGNN) are compositionally biased toward low complexity.

In terms of assembly, homotetramer.

In Staphylococcus aureus (strain Mu50 / ATCC 700699), this protein is Single-stranded DNA-binding protein 2 (ssb-p).